A 130-amino-acid polypeptide reads, in one-letter code: Small ribosomal subunit protein uS11 (130 aa).

It belongs to the universal ribosomal protein uS11 family. In terms of assembly, part of the 30S ribosomal subunit. Interacts with proteins S7 and S18. Binds to IF-3.

Functionally, located on the platform of the 30S subunit, it bridges several disparate RNA helices of the 16S rRNA. Forms part of the Shine-Dalgarno cleft in the 70S ribosome. In Gluconacetobacter diazotrophicus (strain ATCC 49037 / DSM 5601 / CCUG 37298 / CIP 103539 / LMG 7603 / PAl5), this protein is Small ribosomal subunit protein uS11.